We begin with the raw amino-acid sequence, 1132 residues long: Rho GTPase-activating protein gacE (1132 aa).

The Rho-GAP domain occupies 76–262 (LEMNKILKSE…FLISNYLNVF (187 aa)). Disordered stretches follow at residues 279 to 354 (NELL…SSPI) and 472 to 517 (NSTT…SLIN). The span at 281–301 (LLNNNNNNNNVIMPTTTTTTT) shows a compositional bias: low complexity. Residues 302–311 (SASSSILPTD) are compositionally biased toward polar residues. Composition is skewed to low complexity over residues 328 to 354 (SIPLSSIGSSSTSPIISPSSSSSSSPI), 473 to 498 (STTTTTTSTSTSTSTSTSTSTSSTTT), and 507 to 517 (SNSASNNSLIN).

It is found in the cytoplasm. In terms of biological role, rho GTPase-activating protein involved in the signal transduction pathway. This is Rho GTPase-activating protein gacE (gacE) from Dictyostelium discoideum (Social amoeba).